A 278-amino-acid polypeptide reads, in one-letter code: Large ribosomal subunit protein uL2 (278 aa).

Disordered regions lie at residues Met1–His58 and Val224–Arg278. A compositionally biased stretch (basic and acidic residues) spans Glu23–Leu33. Residues Leu37–His58 are compositionally biased toward basic residues. The segment covering Pro253–Ile268 has biased composition (basic and acidic residues). Positions Val269–Arg278 are enriched in basic residues.

Belongs to the universal ribosomal protein uL2 family. In terms of assembly, part of the 50S ribosomal subunit. Forms a bridge to the 30S subunit in the 70S ribosome.

One of the primary rRNA binding proteins. Required for association of the 30S and 50S subunits to form the 70S ribosome, for tRNA binding and peptide bond formation. It has been suggested to have peptidyltransferase activity; this is somewhat controversial. Makes several contacts with the 16S rRNA in the 70S ribosome. This chain is Large ribosomal subunit protein uL2, found in Mycolicibacterium vanbaalenii (strain DSM 7251 / JCM 13017 / BCRC 16820 / KCTC 9966 / NRRL B-24157 / PYR-1) (Mycobacterium vanbaalenii).